A 448-amino-acid chain; its full sequence is Glutamyl-tRNA reductase (448 aa).

Residues 52–55, Ser105, 110–112, and Gln116 contribute to the substrate site; these read TCNR and EDQ. The Nucleophile role is filled by Cys53. NADP(+) is bound at residue 184 to 189; that stretch reads GAGEMG. The disordered stretch occupies residues 406–435; sequence DPDFGGPDQATPPEFTKGMSVEDIPDGMRD.

It belongs to the glutamyl-tRNA reductase family. In terms of assembly, homodimer.

It catalyses the reaction (S)-4-amino-5-oxopentanoate + tRNA(Glu) + NADP(+) = L-glutamyl-tRNA(Glu) + NADPH + H(+). It functions in the pathway porphyrin-containing compound metabolism; protoporphyrin-IX biosynthesis; 5-aminolevulinate from L-glutamyl-tRNA(Glu): step 1/2. Functionally, catalyzes the NADPH-dependent reduction of glutamyl-tRNA(Glu) to glutamate 1-semialdehyde (GSA). The sequence is that of Glutamyl-tRNA reductase from Haloarcula marismortui (strain ATCC 43049 / DSM 3752 / JCM 8966 / VKM B-1809) (Halobacterium marismortui).